Here is a 361-residue protein sequence, read N- to C-terminus: DNA polymerase subunit gamma-2, mitochondrial (361 aa).

Residues 1–18 (MSRIQRCFKSLASAGFFR) constitute a mitochondrion transit peptide.

In terms of assembly, component of the DNA polymerase gamma complex consisting of two subunits: the catalytic subunit DNApol-gamma/DNApolG1 and the accessory subunit PolG2/DNApol-gamma35. As to expression, expressed in ovaries (at protein level).

The protein resides in the mitochondrion. Its function is as follows. As accessory component of the DNA polymerase gamma complex is involved in the replication of mitochondrial DNA. Does not bind DNA. Essential for mitochondrial DNA maintenance and larval development. This is DNA polymerase subunit gamma-2, mitochondrial from Drosophila melanogaster (Fruit fly).